We begin with the raw amino-acid sequence, 285 residues long: Complex I assembly factor TIMMDC1, mitochondrial (285 aa).

A run of 4 helical transmembrane segments spans residues 80–100 (AAVS…FIYA), 137–159 (RWSW…LTVY), 165–185 (MSHF…NLGV), and 188–208 (LVAG…LLMA). Residues 265 to 285 (RIEELLSLPRNPSSPHQQSKH) form a disordered region. The span at 274–285 (RNPSSPHQQSKH) shows a compositional bias: polar residues. Position 277 is a phosphoserine (Ser-277).

The protein belongs to the Tim17/Tim22/Tim23 family. As to quaternary structure, associates with the intermediate 315 kDa subcomplex of incompletely assembled complex I. Interacts with TMEM70.

The protein localises to the mitochondrion membrane. Functionally, chaperone protein involved in the assembly of the mitochondrial NADH:ubiquinone oxidoreductase complex (complex I). Participates in constructing the membrane arm of complex I. This is Complex I assembly factor TIMMDC1, mitochondrial from Mus musculus (Mouse).